The following is a 163-amino-acid chain: Putative 4-hydroxy-4-methyl-2-oxoglutarate aldolase (163 aa).

Substrate-binding positions include 76 to 79 and arginine 98; that span reads GDML. Aspartate 99 contributes to the a divalent metal cation binding site.

This sequence belongs to the class II aldolase/RraA-like family. As to quaternary structure, homotrimer. A divalent metal cation is required as a cofactor.

It carries out the reaction 4-hydroxy-4-methyl-2-oxoglutarate = 2 pyruvate. It catalyses the reaction oxaloacetate + H(+) = pyruvate + CO2. In terms of biological role, catalyzes the aldol cleavage of 4-hydroxy-4-methyl-2-oxoglutarate (HMG) into 2 molecules of pyruvate. Also contains a secondary oxaloacetate (OAA) decarboxylase activity due to the common pyruvate enolate transition state formed following C-C bond cleavage in the retro-aldol and decarboxylation reactions. The sequence is that of Putative 4-hydroxy-4-methyl-2-oxoglutarate aldolase from Pseudomonas putida (strain ATCC 47054 / DSM 6125 / CFBP 8728 / NCIMB 11950 / KT2440).